Reading from the N-terminus, the 374-residue chain is O-methyltransferase acrG (374 aa).

S-adenosyl-L-homocysteine-binding residues include Tyr19, Asn70, Asp96, Ser128, and Phe129. Phe245 provides a ligand contact to Mg(2+).

The protein belongs to the methyltransferase superfamily. Type-7 methyltransferase family.

Its pathway is secondary metabolite biosynthesis. Functionally, O-methyltransferase; part of the cluster that mediates the biosynthesis of acurin A, a highly reduced polyketide coupled to a serine via a peptide bond. The activities of the highly reducing polyketide synthase acrA and the nonribosomal peptide synthetase acrB are collectively responsible for the synthesis of the acurin A core structure with a heptaketide backbone produced by acrA covalently fused to a L-serine by acrB. After the formation of the PK-NRP hybrid product, it is detached from acrB by reductive release to set up the formation of the lactam ring by aldol condensation. The hydrolyase acrC then catalyzes water loss to generate a double bond in the ring. This double bond is probably reduced, which is followed by three oxidations at C-22 to generate the carboxylic acid moiety, involving probably the FAD-binding monooxygenase acrE and the cytochrome P450 monooxygenases acrD and acrF. Finally, a last methylation step performed by the O-methyltransferase acrG leads to the production of acurin A. This chain is O-methyltransferase acrG, found in Aspergillus aculeatus (strain ATCC 16872 / CBS 172.66 / WB 5094).